A 116-amino-acid chain; its full sequence is Large ribosomal subunit protein bL17 (116 aa).

Belongs to the bacterial ribosomal protein bL17 family. Part of the 50S ribosomal subunit. Contacts protein L32.

The protein is Large ribosomal subunit protein bL17 of Sulfurovum sp. (strain NBC37-1).